The chain runs to 510 residues: 2,3-bisphosphoglycerate-independent phosphoglycerate mutase (510 aa).

Aspartate 14 and serine 64 together coordinate Mn(2+). Serine 64 serves as the catalytic Phosphoserine intermediate. Substrate-binding positions include histidine 125, 155–156, arginine 187, arginine 193, 259–262, and lysine 332; these read RD and RADR. Mn(2+)-binding residues include aspartate 399, histidine 403, aspartate 440, histidine 441, and histidine 459.

The protein belongs to the BPG-independent phosphoglycerate mutase family. Monomer. Mn(2+) is required as a cofactor.

It catalyses the reaction (2R)-2-phosphoglycerate = (2R)-3-phosphoglycerate. Its pathway is carbohydrate degradation; glycolysis; pyruvate from D-glyceraldehyde 3-phosphate: step 3/5. Its function is as follows. Catalyzes the interconversion of 2-phosphoglycerate and 3-phosphoglycerate. This chain is 2,3-bisphosphoglycerate-independent phosphoglycerate mutase, found in Pseudomonas savastanoi pv. phaseolicola (strain 1448A / Race 6) (Pseudomonas syringae pv. phaseolicola (strain 1448A / Race 6)).